We begin with the raw amino-acid sequence, 527 residues long: Putative BTB/POZ domain-containing protein R225 (527 aa).

One can recognise a BTB domain in the interval Thr-16 to Tyr-89.

The protein belongs to the mimivirus BTB/WD family.

The polypeptide is Putative BTB/POZ domain-containing protein R225 (Acanthamoeba polyphaga (Amoeba)).